A 450-amino-acid chain; its full sequence is tRNA modification GTPase MnmE (450 aa).

3 residues coordinate (6S)-5-formyl-5,6,7,8-tetrahydrofolate: R24, E82, and K121. The TrmE-type G domain occupies 218-375 (GMHVVLVGQP…LRQVLLEAVG (158 aa)). Residue N228 coordinates K(+). Residues 228 to 233 (NVGKSS), 247 to 253 (TDIAGTT), 272 to 275 (DTAG), and 356 to 358 (SAR) contribute to the GTP site. S232 is a binding site for Mg(2+). Positions 247, 249, and 252 each coordinate K(+). T253 lines the Mg(2+) pocket. Position 450 (K450) interacts with (6S)-5-formyl-5,6,7,8-tetrahydrofolate.

The protein belongs to the TRAFAC class TrmE-Era-EngA-EngB-Septin-like GTPase superfamily. TrmE GTPase family. As to quaternary structure, homodimer. Heterotetramer of two MnmE and two MnmG subunits. K(+) serves as cofactor.

The protein resides in the cytoplasm. Its function is as follows. Exhibits a very high intrinsic GTPase hydrolysis rate. Involved in the addition of a carboxymethylaminomethyl (cmnm) group at the wobble position (U34) of certain tRNAs, forming tRNA-cmnm(5)s(2)U34. The chain is tRNA modification GTPase MnmE from Laribacter hongkongensis (strain HLHK9).